The primary structure comprises 207 residues: Octanoyltransferase (207 aa).

Residues 27–203 enclose the BPL/LPL catalytic domain; sequence ADTEDELWVV…HLETQLTPKA (177 aa). Residues 66–73, 133–135, and 146–148 contribute to the substrate site; these read RGGQITYH, SLG, and GLA. Cys164 acts as the Acyl-thioester intermediate in catalysis.

Belongs to the LipB family.

It is found in the cytoplasm. It carries out the reaction octanoyl-[ACP] + L-lysyl-[protein] = N(6)-octanoyl-L-lysyl-[protein] + holo-[ACP] + H(+). It functions in the pathway protein modification; protein lipoylation via endogenous pathway; protein N(6)-(lipoyl)lysine from octanoyl-[acyl-carrier-protein]: step 1/2. In terms of biological role, catalyzes the transfer of endogenously produced octanoic acid from octanoyl-acyl-carrier-protein onto the lipoyl domains of lipoate-dependent enzymes. Lipoyl-ACP can also act as a substrate although octanoyl-ACP is likely to be the physiological substrate. This is Octanoyltransferase from Neisseria gonorrhoeae (strain ATCC 700825 / FA 1090).